The sequence spans 148 residues: UPF0756 membrane protein KPN78578_11500 (148 aa).

4 consecutive transmembrane segments (helical) span residues 14-34 (ALGF…LIIV), 51-71 (LTVG…SGTL), 86-106 (LLAI…VSLM), and 121-141 (VLGV…AGII).

The protein belongs to the UPF0756 family.

The protein resides in the cell membrane. This chain is UPF0756 membrane protein KPN78578_11500, found in Klebsiella pneumoniae subsp. pneumoniae (strain ATCC 700721 / MGH 78578).